The chain runs to 1399 residues: DNA-directed RNA polymerase subunit beta' (1399 aa).

Residues Cys-70, Cys-72, Cys-85, and Cys-88 each coordinate Zn(2+). Mg(2+) is bound by residues Asp-460, Asp-462, and Asp-464. Residues Cys-814, Cys-888, Cys-895, and Cys-898 each contribute to the Zn(2+) site.

It belongs to the RNA polymerase beta' chain family. The RNAP catalytic core consists of 2 alpha, 1 beta, 1 beta' and 1 omega subunit. When a sigma factor is associated with the core the holoenzyme is formed, which can initiate transcription. The cofactor is Mg(2+). Requires Zn(2+) as cofactor.

The enzyme catalyses RNA(n) + a ribonucleoside 5'-triphosphate = RNA(n+1) + diphosphate. Its function is as follows. DNA-dependent RNA polymerase catalyzes the transcription of DNA into RNA using the four ribonucleoside triphosphates as substrates. The chain is DNA-directed RNA polymerase subunit beta' from Pseudomonas putida (strain ATCC 700007 / DSM 6899 / JCM 31910 / BCRC 17059 / LMG 24140 / F1).